The sequence spans 159 residues: MTTRAIYPGTFDPITNGHLDIITRAASMFDELILAVAASPHKKTMFSLDERVALAQQAAAHLQNVSVTGFSDLMANFAQAQQGNVLVRGLRTAGDFEYEMQLAHMNRHLMPTLESVFLMPSKEWSFISSSLVKEVARHQGDVSHFLPAHVHQALLEKLR.

Thr10 is a substrate binding site. Residues 10-11 and His18 contribute to the ATP site; that span reads TF. Substrate is bound by residues Lys42, Met74, and Arg88. Residues 89–91, Glu99, and 124–130 each bind ATP; these read GLR and WSFISSS.

Belongs to the bacterial CoaD family. In terms of assembly, homohexamer. The cofactor is Mg(2+).

It localises to the cytoplasm. The catalysed reaction is (R)-4'-phosphopantetheine + ATP + H(+) = 3'-dephospho-CoA + diphosphate. The protein operates within cofactor biosynthesis; coenzyme A biosynthesis; CoA from (R)-pantothenate: step 4/5. In terms of biological role, reversibly transfers an adenylyl group from ATP to 4'-phosphopantetheine, yielding dephospho-CoA (dPCoA) and pyrophosphate. The chain is Phosphopantetheine adenylyltransferase from Cronobacter sakazakii (strain ATCC BAA-894) (Enterobacter sakazakii).